Here is a 150-residue protein sequence, read N- to C-terminus: Small ribosomal subunit protein uS11 (150 aa).

Belongs to the universal ribosomal protein uS11 family. Part of the 30S ribosomal subunit. Interacts with proteins S7 and S18. Binds to IF-3.

In terms of biological role, located on the platform of the 30S subunit, it bridges several disparate RNA helices of the 16S rRNA. Forms part of the Shine-Dalgarno cleft in the 70S ribosome. This Pelagibacter ubique (strain HTCC1062) protein is Small ribosomal subunit protein uS11.